The following is a 305-amino-acid chain: Dermonecrotic toxin LrSicTox-alphaIA1ii (305 aa).

The first 18 residues, 1 to 18 (MLLYVTLILGCWSAFSES), serve as a signal peptide directing secretion. A propeptide spanning residues 19–26 (AETDVAER) is cleaved from the precursor. The active site involves H37. Mg(2+)-binding residues include E57 and D59. H73 functions as the Nucleophile in the catalytic mechanism. 2 cysteine pairs are disulfide-bonded: C77/C83 and C79/C222. Residue D117 participates in Mg(2+) binding. N282 carries an N-linked (GlcNAc...) asparagine glycan.

It belongs to the arthropod phospholipase D family. Class II subfamily. Class IIa sub-subfamily. The cofactor is Mg(2+). As to expression, expressed by the venom gland.

It localises to the secreted. The enzyme catalyses an N-(acyl)-sphingosylphosphocholine = an N-(acyl)-sphingosyl-1,3-cyclic phosphate + choline. It catalyses the reaction an N-(acyl)-sphingosylphosphoethanolamine = an N-(acyl)-sphingosyl-1,3-cyclic phosphate + ethanolamine. It carries out the reaction a 1-acyl-sn-glycero-3-phosphocholine = a 1-acyl-sn-glycero-2,3-cyclic phosphate + choline. The catalysed reaction is a 1-acyl-sn-glycero-3-phosphoethanolamine = a 1-acyl-sn-glycero-2,3-cyclic phosphate + ethanolamine. With respect to regulation, inhibited with low affinity by edelfosine. In terms of biological role, dermonecrotic toxins cleave the phosphodiester linkage between the phosphate and headgroup of certain phospholipids (sphingolipid and lysolipid substrates), forming an alcohol (often choline) and a cyclic phosphate. This toxin acts on sphingomyelin (SM). It also acts on a broad range of lysophospholipids, like lysophosphatidylinositol (LPI), lysophosphatidylglycerol (LPG), lysophosphatidylethanolamine (LPE), lysobisphosphatidic acid (LBPA), lysophosphatidylserine (LPS) and lysophosphatidylcholines (LPC) of varying chain lengths. The substrate preference is LPI &gt; LPG &gt; LPS &gt; LPC &gt;&gt; LPE, LBPA. Furthermore, the enzyme also act on cyclic phosphatidic acid and lyso-platelet activating factor (LPAF, an alkyl-LPC). The enzyme does not act on sphingosylphosphorylcholine (SPC, also known as lyso-sphingomyelin) and PAF. The toxin may also act on ceramide phosphoethanolamine (CPE). It acts by transphosphatidylation, releasing exclusively cyclic phosphate products as second products. It does not exhibit detectable PLA1/2 activity. It induces dose-dependent hemolysis and dermonecrosis. Also induces increased vascular permeability, edema, inflammatory response, and platelet aggregation. In Loxosceles reclusa (Brown recluse spider), this protein is Dermonecrotic toxin LrSicTox-alphaIA1ii.